A 316-amino-acid chain; its full sequence is MTVIDNHGVLAKDGELSEASARDYFELLKPRVMSLVVFTAFAGLVLAPGHIHPVLGTIAILCIAVGAGASGALNMWYDADIDAIMSRTANRPIPAGRIAPSEALAFGLVLSGFSVVILGLAVNWLSAGILAFTIFFYAVVYTMWLKRSTPQNIVIGGAAGAFPPMIGWACVTNSVTIESTVLFLIIFLWTPAHFWALALFKMRDYEAVGVPMLPNVAGERVTKHQIVAYAVLTAVCAVLPSFLGFASLGYGLVAAALGAIFIYCSIAVWRMPDGDLKMIPAKKLFGFSIFYLFAVFSALMIDRLAPVLVSHAGGWF.

9 helical membrane-spanning segments follow: residues 32 to 52 (VMSLVVFTAFAGLVLAPGHIH), 53 to 73 (PVLGTIAILCIAVGAGASGAL), 93 to 113 (IPAGRIAPSEALAFGLVLSGF), 116 to 136 (VILGLAVNWLSAGILAFTIFF), 152 to 172 (NIVIGGAAGAFPPMIGWACVT), 180 to 200 (TVLFLIIFLWTPAHFWALALF), 221 to 241 (VTKHQIVAYAVLTAVCAVLPS), 252 to 271 (LVAAALGAIFIYCSIAVWRM), and 289 to 309 (IFYLFAVFSALMIDRLAPVLV).

It belongs to the UbiA prenyltransferase family. Protoheme IX farnesyltransferase subfamily.

The protein localises to the cell inner membrane. It carries out the reaction heme b + (2E,6E)-farnesyl diphosphate + H2O = Fe(II)-heme o + diphosphate. The protein operates within porphyrin-containing compound metabolism; heme O biosynthesis; heme O from protoheme: step 1/1. In terms of biological role, converts heme B (protoheme IX) to heme O by substitution of the vinyl group on carbon 2 of heme B porphyrin ring with a hydroxyethyl farnesyl side group. In Rhizobium johnstonii (strain DSM 114642 / LMG 32736 / 3841) (Rhizobium leguminosarum bv. viciae), this protein is Protoheme IX farnesyltransferase.